Consider the following 443-residue polypeptide: EGF-containing fibulin-like extracellular matrix protein 2 (443 aa).

A signal peptide spans 1–23 (MLPCASCLPGSLLLWALLLLLLG). In terms of domain architecture, EGF-like 1; atypical spans 36–81 (YTECTDGYEWDPDSQHCRDVNECLTIPEACKGEMKCINHYGGYLCL). Disulfide bonds link Cys-58-Cys-121, Cys-65-Cys-80, Cys-71-Cys-109, Cys-127-Cys-140, Cys-134-Cys-149, Cys-151-Cys-162, Cys-168-Cys-177, Cys-173-Cys-186, Cys-188-Cys-201, Cys-207-Cys-217, Cys-213-Cys-226, Cys-228-Cys-241, Cys-247-Cys-258, Cys-254-Cys-267, Cys-269-Cys-281, Cys-287-Cys-300, Cys-294-Cys-309, and Cys-315-Cys-327. Residues 123-163 (DVDECAQALHDCRPSQDCHNLPGSYQCTCPDGYRKIGPECV) enclose the EGF-like 2; calcium-binding domain. In terms of domain architecture, EGF-like 3; calcium-binding spans 164–202 (DIDECRYRYCQHRCVNLPGSFRCQCEPGFQLGPNNRSCV). Asn-198 carries an N-linked (GlcNAc...) asparagine glycan. In terms of domain architecture, EGF-like 4; calcium-binding spans 203-242 (DVNECDMGAPCEQRCFNSYGTFLCRCHQGYELHRDGFSCS). One can recognise an EGF-like 5; calcium-binding domain in the interval 243-282 (DIDECSYSSYLCQYRCINEPGRFSCHCPQGYQLLATRLCQ). Residues 283-328 (DIDECESGAHQCSEAQTCVNFHGGYRCVDTNRCVEPYIQVSENRCL) enclose the EGF-like 6; calcium-binding domain. Asn-394 is a glycosylation site (N-linked (GlcNAc...) asparagine).

This sequence belongs to the fibulin family. Homodimer; disulfide-linked. Multimer; allows heparin binding. Monomer. Interacts with FBN1 (via N-terminal domain); this interaction inhibits EFEMP2 binding to LOX and ELN. Interacts with LOX (via propeptide); this interaction is strong and facilitates formation of ternary complexes with ELN during elastic fiber assembly; this interaction limits interaction of EFEMP2 with FBLN5. Interacts with PITX2. Interacts with ELN with moderate affinity; this interaction regulates ELN self-assembly maturation stage. Interacts with FBLN5 with moderate affinity. Interacts with LOXL1 (via propeptide), LTBP1 and TGFB1 stronger than with LOXL2 and LTBP3. Interacts with PCOLCE. Interacts with collagen type IV trimer (COL4A1-COL4A1-COL4A2), NID2 and moderately with COL15A1-derived endostatin. Interacts with EMILIN1; this interaction promotes the incorporation of EFEMP2 into the extracellular matrix. Interacts with LTBP4; the LTBP4 long form (LTBP4L) has a stronger binding affinity than the LTBP4 short form and the LTBP4 long form promotes fibrillar deposition of EFEMP2. N-glycosylated; contains mostly complex-type glycans. Not O-glycosylated. In terms of processing, cleaved by ELANE; produces a 50-55 kDa fragment. Cleaved by MMP2 and MMP9; produces several fragments.

The protein localises to the secreted. The protein resides in the extracellular space. It localises to the extracellular matrix. Its subcellular location is the basement membrane. Its function is as follows. Plays a crucial role in elastic fiber formation in tissue, and in the formation of ultrastructural connections between elastic laminae and smooth muscle cells in the aorta, therefore participates in terminal differentiation and maturation of smooth muscle cell (SMC) and in the mechanical properties and wall integrity maintenance of the aorta. In addition, is involved in the control of collagen fibril assembly in tissue throught proteolytic activation of LOX leading to cross- linking of collagen and elastin. Also promotes ELN coacervation and participates in the deposition of ELN coacervates on to microfibrils but also regulates ELN cross- linking through LOX interaction. Moreover adheres to the cells through heparin binding in a calcium-dependent manner and regulates vascularlar smooth muscle cells proliferation through angiotensin signaling. This chain is EGF-containing fibulin-like extracellular matrix protein 2, found in Homo sapiens (Human).